The chain runs to 153 residues: Alpha-amylase type B isozyme (153 aa).

Residues K19, 25 to 27 (GWW), H38, Q44, K123, and W150 each bind substrate.

This sequence belongs to the glycosyl hydrolase 13 family. As to quaternary structure, monomer. It depends on Ca(2+) as a cofactor.

The catalysed reaction is Endohydrolysis of (1-&gt;4)-alpha-D-glucosidic linkages in polysaccharides containing three or more (1-&gt;4)-alpha-linked D-glucose units.. The sequence is that of Alpha-amylase type B isozyme (AMY1.4) from Hordeum vulgare (Barley).